Consider the following 35-residue polypeptide: KSCCKNTLGRNCYNTCRFIKKPRKTCAGLCGCKIS.

Intrachain disulfides connect cysteine 4–cysteine 32, cysteine 12–cysteine 30, and cysteine 16–cysteine 26.

Post-translationally, contains 4 disulfide bonds.

It is found in the secreted. In terms of biological role, antimicrobial peptide disrupting membranes. Has antibacterial against Gram-positive bacteria S.aureus (MIC=6.5 uM) and B.subtilis (MIC=3.25 uM) but not against Gram-negative bacterium E.coli. Has antifungal activity against C.albicans (MIC=3.25 uM). In Nigella sativa (Black cumin), this protein is Thionin NsW2.